The following is a 528-amino-acid chain: MGQEVSSVNNTKNEHHKTNKKSLKGGNERHEMKESSVGISKKIVENSFNNSKLRPGMFIQNSNVVFNEQYKGIKILGKGSFGEVILSRDKHTGHEYAIKVISKKHVKRKTDKESLLREVELLKMLDHINIMKLYEFFEDNNYYYLVSDVYTGGELFDEIISRKRFYEIDAARIIKQILSGITYMHKNNVVHRDLKPENILLETKNKEDMIIKIIDFGLSTHFEYSKKMKDKIGTAYYIAPDVLHGTYDEKCDIWSCGVILYILLSGCPPFNGSNEYDILKKVEAGKYTFDLPQFKKISDKAKDLIKKMLMYTSAVRISARDALEHEWIKMMTSKDNLNIDIPSLELSIANIRQFQSTQKLAQAALLYMGSKLTTIDETKELTKIFKKMDKNGDGQLDRNELIIGYKELLKLKGEDTSDLDNAAIEYEVDQILNSIDLDQNGYIEYSEFLTVSIDRKLLLSTERLEKAFKLFDKDGSGKISANELAQLFGLSDVSSECWKTVLKEVDQNNDGEIDFKEFRDMLVKLCNY.

The tract at residues 1–36 (MGQEVSSVNNTKNEHHKTNKKSLKGGNERHEMKESS) is disordered. Glycine 2 carries the N-myristoyl glycine lipid modification. Over residues 14–23 (EHHKTNKKSL) the composition is skewed to basic residues. The 259-residue stretch at 71–329 (KGIKILGKGS…RDALEHEWIK (259 aa)) folds into the Protein kinase domain. Residues 76 to 84 (LGKGSFGEV) and lysine 99 contribute to the ATP site. Aspartate 193 acts as the Proton acceptor in catalysis. The J domain autoinhibitory motif motif lies at 350–358 (NIRQFQSTQ). Positions 350–386 (NIRQFQSTQKLAQAALLYMGSKLTTIDETKELTKIFK) are j domain. Positions 359–368 (KLAQAALLYM) match the J domain EF-hand interaction motif motif. EF-hand domains are found at residues 376 to 411 (DETK…LLKL), 427 to 458 (EVDQ…RKLL), 459 to 494 (LSTE…SDVS), and 496 to 528 (ECWK…LCNY). Aspartate 389, asparagine 391, aspartate 393, glutamine 395, glutamate 400, aspartate 436, aspartate 438, asparagine 440, tyrosine 442, glutamate 447, aspartate 472, aspartate 474, serine 476, lysine 478, glutamate 483, aspartate 506, asparagine 508, aspartate 510, glutamate 512, and glutamate 517 together coordinate Ca(2+).

It belongs to the protein kinase superfamily. Ser/Thr protein kinase family. CDPK subfamily. As to quaternary structure, may interact with the pre-replication MCM complex prior male gametogenesis activation. It depends on Mg(2+) as a cofactor. In terms of processing, myristoylated; myristoylation may target it to different subcellular compartments. During male gametogenesis, myristoylation is required to initiate DNA replication but not for mitotic spindle assembly or axoneme activation. Post-translationally, not palmitoylated. May be autophosphorylated on Thr-234 in vitro.

It localises to the cytoplasm. Its subcellular location is the cell membrane. It carries out the reaction L-seryl-[protein] + ATP = O-phospho-L-seryl-[protein] + ADP + H(+). The catalysed reaction is L-threonyl-[protein] + ATP = O-phospho-L-threonyl-[protein] + ADP + H(+). Activated by calcium. Upon calcium binding to the EF-hand domains, the C-terminus of the junction domain (J domain) undergoes a conformational change which results in the dissociation of the pseudo-substrate inhibitory motif from the catalytic domain. This, in turn, may facilitate the autophosphorylation of the activation loop at Thr-234, which leads to the kinase activation. Intracellular calcium increase is triggered by xanthurenic acid (XA), a small mosquito molecule that induces the differentiation of specialized transmission stages, the gametocytes, into male and female gametes. Activated by a decrease in temperature (20 degrees Celsius) and an increase in pH (7.6) occurring when the parasite is ingested by in the mosquito. In terms of biological role, calcium-dependent protein kinase which acts as a sensor and effector of intracellular Ca(2+) levels probably in part downstream of cGMP-activated PKG kinase. Plays a central role in the host erythrocytes and hepatocytes infection cycles, sexual reproduction and mosquito transmission of the parasite. During the liver stage, involved in sporozoite motility and thus in sporozoite invasion of host hepatocytes, probably together with CDPK1 and CDPK5. Involved in merosome egress from host hepatocytes, probably together with CDPK5. During the asexual blood stage, involved in merozoite invasion of host erythrocytes and motility by stabilizing the inner membrane complex, a structure below the plasma membrane which acts as an anchor for the glidosome, an acto-myosin motor. Required for cell cycle progression in the male gametocyte. During male gametogenesis in the mosquito gut, required to initiate the first round of DNA replication, probably by facilitating the assembly of the pre-replicative MCM complex, to assemble the first mitotic spindle and, at the end of gametogenesis, to initiate axoneme motility, cytokinesis and subsequent exflagellation. For each of these steps, may phosphorylate SOC1, SOC2 and SOC3, respectively. Together with CDPK1, regulates ookinete gliding in the mosquito host midgut. The protein is Calcium-dependent protein kinase 4 of Plasmodium falciparum (isolate 3D7).